The following is a 499-amino-acid chain: Isoflavone 2'-hydroxylase (499 aa).

C436 is a binding site for heme.

The protein belongs to the cytochrome P450 family. Requires heme as cofactor.

It is found in the membrane. It carries out the reaction a 2'-unsubstituted isoflavone + reduced [NADPH--hemoprotein reductase] + O2 = a 2'-hydroxyisoflavone + oxidized [NADPH--hemoprotein reductase] + H2O + H(+). Its function is as follows. Catalyzes the hydroxylation of isoflavones, daidzein and formononetin, to yield 2'-hydroxyisoflavones, 2'-hydroxydaidzein, and 2'-hydroxyformononetin, respectively. This chain is Isoflavone 2'-hydroxylase (CYP81E1), found in Glycyrrhiza echinata (Licorice).